Reading from the N-terminus, the 299-residue chain is Oxygen-dependent coproporphyrinogen-III oxidase (299 aa).

Position 92 (Ser92) interacts with substrate. Residues His96 and His106 each coordinate Mn(2+). Residue His106 is the Proton donor of the active site. 108 to 110 (NVR) is a binding site for substrate. Mn(2+)-binding residues include His145 and His175. The important for dimerization stretch occupies residues 240–275 (YVEFNLVWDRGTLFGLQTGGRTESILMSMPPLVRWE). 258–260 (GGR) contributes to the substrate binding site.

It belongs to the aerobic coproporphyrinogen-III oxidase family. Homodimer. The cofactor is Mn(2+).

It localises to the cytoplasm. It carries out the reaction coproporphyrinogen III + O2 + 2 H(+) = protoporphyrinogen IX + 2 CO2 + 2 H2O. The protein operates within porphyrin-containing compound metabolism; protoporphyrin-IX biosynthesis; protoporphyrinogen-IX from coproporphyrinogen-III (O2 route): step 1/1. Its function is as follows. Involved in the heme biosynthesis. Catalyzes the aerobic oxidative decarboxylation of propionate groups of rings A and B of coproporphyrinogen-III to yield the vinyl groups in protoporphyrinogen-IX. This is Oxygen-dependent coproporphyrinogen-III oxidase from Escherichia coli O8 (strain IAI1).